We begin with the raw amino-acid sequence, 784 residues long: MASTRSIELEHFEERDKRPRPGSRRGAPSSSGGSSSSGPKGNGLIPSPAHSAHCSFYRTRTLQALSSEKKAKKARFYRNGDRYFKGLVFAISSDRFRSFDALLMELTRSLSDNVNLPQGVRTIYTIDGSRKVTSLDELLEGESYVCASNEPFRKVDYTKNINPNWSVNIKGGTARALAAPSSVKSEVKESKDFIKPKLVTVIRSGVKPRKAVRILLNKKTAHSFEQVLTDITEAIKLDSGVVKRLCTLDGKQVTCLQDFFGDDDVFIACGPEKFRYAQDDFVLDHSECRVLKSSYSRSSAVKYSGSKSPGPSRRSKSPASVKRGGHHASAYSAARSPVNGTPSSQLSTPKSTKSSSSSPTSPGSFRGLKQISAHGRSSSNVNGGPELARCLSPEGVNGNRCSESSTLLEKYKIGKVIGDGNFAVVKECMDRSTGKEFALKIIDKAKCCGKEHLIENEVSILRRVKHPNIIMLVEEMETATELFLVMELVKGGDLFDAITSSTKYTERDGSAMVYNLANALRYLHGLSIVHRDIKPENLLVCEYPDGTKSLKLGDFGLATVVEGPLYTVCGTPTYVAPEIIAETGYGLKVDIWAAGVITYILLCGFPPFRSENNLQEDLFDQILAGKLEFPAPYWDNITDSAKELISQMLQVNVEARCTAGEILSHPWVSDDASQENNMQAEVTGKLKQHFNNALPKQNSTTTGVSVIMNTALDKEGQIFCSKHCQDSSRPGMELTSPVPPSASAEEPPVSAPAAAPAPLESPTPPGTPAASGCERAGTWRRHRD.

The disordered stretch occupies residues 1–45; that stretch reads MASTRSIELEHFEERDKRPRPGSRRGAPSSSGGSSSSGPKGNGLI. Over residues 7-19 the composition is skewed to basic and acidic residues; the sequence is IELEHFEERDKRP. A compositionally biased stretch (low complexity) spans 24–39; that stretch reads RRGAPSSSGGSSSSGP. Residue threonine 61 is modified to Phosphothreonine. 2 consecutive Doublecortin domains span residues 72–158 and 197–280; these read KKAR…VDYT and KLVT…AQDD. 2 stretches are compositionally biased toward low complexity: residues 300–312 and 341–364; these read AVKY…PGPS and TPSS…SPGS. The disordered stretch occupies residues 300-368; that stretch reads AVKYSGSKSP…PTSPGSFRGL (69 aa). Serine 379 carries the phosphoserine modification. One can recognise a Protein kinase domain in the interval 411–668; sequence YKIGKVIGDG…AGEILSHPWV (258 aa). ATP-binding positions include 417–425 and lysine 440; that span reads IGDGNFAVV. Aspartate 532 acts as the Proton acceptor in catalysis. Serine 664 carries the phosphoserine modification. Position 683 is a phosphothreonine (threonine 683). The tract at residues 724 to 784 is disordered; it reads CQDSSRPGME…RAGTWRRHRD (61 aa). The span at 741–758 shows a compositional bias: low complexity; the sequence is SASAEEPPVSAPAAAPAP.

This sequence belongs to the protein kinase superfamily. CAMK Ser/Thr protein kinase family. CaMK subfamily. Binds to and stabilizes microtubules. Interacts with MAPK8IP1/JIP-1, MAPK8IP2/JIP-2, MAPK9/JNK2, PPP1R9B/NEURABIN-2 and actin. Autophosphorylated.

It localises to the cytoplasm. The protein resides in the cytoskeleton. The enzyme catalyses L-seryl-[protein] + ATP = O-phospho-L-seryl-[protein] + ADP + H(+). It catalyses the reaction L-threonyl-[protein] + ATP = O-phospho-L-threonyl-[protein] + ADP + H(+). Functionally, protein kinase with a significantly reduced Ca(2+)/CAM affinity and dependence compared to other members of the CaMK family. May play a role in the down-regulation of CRE-dependent gene activation probably by phosphorylation of the CREB coactivator CRTC2/TORC2 and the resulting retention of TORC2 in the cytoplasm. This is Serine/threonine-protein kinase DCLK2 (DCLK2) from Ailuropoda melanoleuca (Giant panda).